A 227-amino-acid polypeptide reads, in one-letter code: Trypsin (227 aa).

The region spanning 1-223 (IVGGEDANVQ…YYDVLMEQIN (223 aa)) is the Peptidase S1 domain. Cysteines 27 and 43 form a disulfide. Active-site charge relay system residues include H42 and D88. 2 disulfides stabilise this stretch: C150–C164 and C175–C199. S179 acts as the Charge relay system in catalysis.

It belongs to the peptidase S1 family.

It carries out the reaction Preferential cleavage: Arg-|-Xaa, Lys-|-Xaa.. The protein is Trypsin of Saccharopolyspora erythraea (Streptomyces erythraeus).